A 198-amino-acid polypeptide reads, in one-letter code: Segregation and condensation protein B (198 aa).

The tract at residues 167–198 is disordered; sequence PKLADPEADDPDQNEMDLFFDRFNQSKEQEEE. A compositionally biased stretch (acidic residues) spans 172–181; sequence PEADDPDQNE.

It belongs to the ScpB family. Homodimer. Homodimerization may be required to stabilize the binding of ScpA to the Smc head domains. Component of a cohesin-like complex composed of ScpA, ScpB and the Smc homodimer, in which ScpA and ScpB bind to the head domain of Smc. The presence of the three proteins is required for the association of the complex with DNA.

The protein resides in the cytoplasm. Participates in chromosomal partition during cell division. May act via the formation of a condensin-like complex containing Smc and ScpA that pull DNA away from mid-cell into both cell halves. The chain is Segregation and condensation protein B from Listeria welshimeri serovar 6b (strain ATCC 35897 / DSM 20650 / CCUG 15529 / CIP 8149 / NCTC 11857 / SLCC 5334 / V8).